The chain runs to 426 residues: CAAX prenyl protease 1 homolog (426 aa).

Over 1 to 3 the chain is Lumenal; sequence MVN. Residues 4 to 24 form a helical membrane-spanning segment; sequence YFIISISFFLLEHFYSFYLNF. The Cytoplasmic segment spans residues 25–70; that stretch reads RQSKLLKNLTKVPEYCKDRITQEDFKKSQEYSKAKLDYKTLTSTIQ. Residues 71-91 traverse the membrane as a helical segment; the sequence is VLTTLLSFYYPVYPYFWNLSL. The Lumenal segment spans residues 92–106; sequence ELAEKIGYPNEIIRS. A helical membrane pass occupies residues 107 to 127; it reads CFFFAFTVGVSVITEIPFSYY. The Cytoplasmic portion of the chain corresponds to 128-150; that stretch reads YQFILEEKFGYNRMTRTLFIKDK. The chain crosses the membrane as a helical span at residues 151–171; the sequence is IISTLLMIGFGLPILSLAIFI. The Lumenal portion of the chain corresponds to 172–178; that stretch reads INWSGPQ. The helical transmembrane segment at 179-199 threads the bilayer; sequence LWFYCWLLLVAITLLSITIYP. Topologically, residues 200-294 are cytoplasmic; sequence TFIQPLFNKF…GHYKMSHTLK (95 aa). Residue H282 participates in Zn(2+) binding. E283 is an active-site residue. Residue H286 participates in Zn(2+) binding. The chain crosses the membrane as a helical span at residues 295–315; sequence QMLLVQVHLVTLLYAFSLLIN. Over 316-333 the chain is Lumenal; the sequence is DDQLYQQFGFVSSKDSVL. A helical transmembrane segment spans residues 334-354; it reads VGLTLFMFLYSPIDRIFSLLI. The Cytoplasmic portion of the chain corresponds to 355–426; it reads NIFSRKYEFQ…KVALYKLKNK (72 aa). E362 is a Zn(2+) binding site.

It belongs to the peptidase M48B family. Requires Zn(2+) as cofactor.

Its subcellular location is the endoplasmic reticulum membrane. It catalyses the reaction Hydrolyzes the peptide bond -P2-(S-farnesyl or geranylgeranyl)C-P1'-P2'-P3'-COOH where P1' and P2' are amino acids with aliphatic side chains and P3' is any C-terminal residue.. Its function is as follows. Proteolytically removes the C-terminal three residues of farnesylated proteins. In Dictyostelium discoideum (Social amoeba), this protein is CAAX prenyl protease 1 homolog (zmpste24).